A 156-amino-acid polypeptide reads, in one-letter code: 6,7-dimethyl-8-ribityllumazine synthase (156 aa).

5-amino-6-(D-ribitylamino)uracil contacts are provided by residues Phe23, 57-59 (AFE), and 81-83 (AVI). 86–87 (AT) serves as a coordination point for (2S)-2-hydroxy-3-oxobutyl phosphate. The active-site Proton donor is His89. Asn114 is a 5-amino-6-(D-ribitylamino)uracil binding site. Arg128 lines the (2S)-2-hydroxy-3-oxobutyl phosphate pocket.

The protein belongs to the DMRL synthase family.

It carries out the reaction (2S)-2-hydroxy-3-oxobutyl phosphate + 5-amino-6-(D-ribitylamino)uracil = 6,7-dimethyl-8-(1-D-ribityl)lumazine + phosphate + 2 H2O + H(+). It functions in the pathway cofactor biosynthesis; riboflavin biosynthesis; riboflavin from 2-hydroxy-3-oxobutyl phosphate and 5-amino-6-(D-ribitylamino)uracil: step 1/2. In terms of biological role, catalyzes the formation of 6,7-dimethyl-8-ribityllumazine by condensation of 5-amino-6-(D-ribitylamino)uracil with 3,4-dihydroxy-2-butanone 4-phosphate. This is the penultimate step in the biosynthesis of riboflavin. In Aliarcobacter butzleri (strain RM4018) (Arcobacter butzleri), this protein is 6,7-dimethyl-8-ribityllumazine synthase.